The chain runs to 744 residues: Polyadenylate-binding protein, cytoplasmic and nuclear (744 aa).

Over residues 1 to 11 the composition is skewed to polar residues; it reads MSEVANSTSPV. The tract at residues 1-42 is disordered; that stretch reads MSEVANSTSPVQDGADANGAQINTNVPAASGDAPTPTTAAQQ. Over residues 33–42 the composition is skewed to low complexity; the sequence is APTPTTAAQQ. 4 consecutive RRM domains span residues 48–126, 136–213, 229–306, and 332–462; these read ASLY…WSQR, GNVF…HHIP, TNIY…RAQK, and VNLY…LAQR. 4 disordered regions span residues 368–411, 527–550, 607–651, and 723–744; these read EEKK…AGDK, GRGA…NAQQ, IAGG…PGVD, and VKNK…EEKA. Positions 376-397 are enriched in basic and acidic residues; it reads KEVKEEKKEDEKKEDEEAKEGS. Gly residues-rich tracts occupy residues 527-545, 609-632, and 640-649; these read GRGA…GRGG, GGPG…GGRG, and PQGGRPGGPG. The PABC domain maps to 647-724; that stretch reads GPGVDMSVLS…AMSVYDEYVK (78 aa).

The protein belongs to the polyadenylate-binding protein type-1 family.

The protein localises to the cytoplasm. It localises to the nucleus. In terms of biological role, binds the poly(A) tail of mRNA. Appears to be an important mediator of the multiple roles of the poly(A) tail in mRNA biogenesis, stability and translation. In the nucleus, involved in both mRNA cleavage and polyadenylation. Is also required for efficient mRNA export to the cytoplasm. Acts in concert with a poly(A)-specific nuclease (PAN) to affect poly(A) tail shortening, which may occur concomitantly with either nucleocytoplasmic mRNA transport or translational initiation. In the cytoplasm, stimulates translation initiation and regulates mRNA decay through translation termination-coupled poly(A) shortening, probably mediated by PAN. The polypeptide is Polyadenylate-binding protein, cytoplasmic and nuclear (PAB1) (Phaeosphaeria nodorum (strain SN15 / ATCC MYA-4574 / FGSC 10173) (Glume blotch fungus)).